A 377-amino-acid polypeptide reads, in one-letter code: Citrate synthase (377 aa).

Residues histidine 220, histidine 259, and aspartate 313 contribute to the active site.

This sequence belongs to the citrate synthase family. Homodimer.

It carries out the reaction oxaloacetate + acetyl-CoA + H2O = citrate + CoA + H(+). Its pathway is carbohydrate metabolism; tricarboxylic acid cycle; isocitrate from oxaloacetate: step 1/2. Its function is as follows. Might regulate the synthesis and function of enzymes involved in later enzymatic steps of Krebs cycle. Loss in activity results in sporulation defect. The protein is Citrate synthase (gltA) of Deinococcus radiodurans (strain ATCC 13939 / DSM 20539 / JCM 16871 / CCUG 27074 / LMG 4051 / NBRC 15346 / NCIMB 9279 / VKM B-1422 / R1).